A 202-amino-acid polypeptide reads, in one-letter code: D-alanyl-D-alanine dipeptidase (202 aa).

Positions 116 and 123 each coordinate Zn(2+). The active-site Proton donor/acceptor is the Glu181. His184 serves as a coordination point for Zn(2+).

It belongs to the peptidase M15D family. Requires Zn(2+) as cofactor.

The catalysed reaction is D-alanyl-D-alanine + H2O = 2 D-alanine. Its function is as follows. Catalyzes hydrolysis of the D-alanyl-D-alanine dipeptide. May play a role in immunity or defense against glycopeptide antibiotics (perhaps at a moderate level) in the soil environment. Might confer vancomycin resistance to S.coelicolor. This chain is D-alanyl-D-alanine dipeptidase (vanX), found in Streptomyces coelicolor (strain ATCC BAA-471 / A3(2) / M145).